A 109-amino-acid chain; its full sequence is Large ribosomal subunit protein uL24 (109 aa).

The protein belongs to the universal ribosomal protein uL24 family. Part of the 50S ribosomal subunit.

In terms of biological role, one of two assembly initiator proteins, it binds directly to the 5'-end of the 23S rRNA, where it nucleates assembly of the 50S subunit. One of the proteins that surrounds the polypeptide exit tunnel on the outside of the subunit. This is Large ribosomal subunit protein uL24 from Ehrlichia canis (strain Jake).